Reading from the N-terminus, the 164-residue chain is Large ribosomal subunit protein uL15 (164 aa).

Over residues 1 to 33 (MTSKKRRQRGSRTHGGGTHKNRRGAGHRGGRGR) the composition is skewed to basic residues. Disordered regions lie at residues 1–59 (MTSK…PGAE) and 137–164 (AGGS…NDEN). The span at 34-43 (AGRDKHEQHN) shows a compositional bias: basic and acidic residues. Residues 153–164 (GEDEEPNSNDEN) show a composition bias toward acidic residues.

Belongs to the universal ribosomal protein uL15 family. As to quaternary structure, part of the 50S ribosomal subunit.

In terms of biological role, binds to the 23S rRNA. The chain is Large ribosomal subunit protein uL15 from Haloquadratum walsbyi (strain DSM 16790 / HBSQ001).